Consider the following 691-residue polypeptide: F-box/LRR-repeat protein 5 (691 aa).

Residues 1 to 159 are hemerythrin-like; that stretch reads MAPFPEEVDV…IKKKVIAQHC (159 aa). The Fe(3+) site is built by histidine 15, histidine 57, glutamate 58, glutamate 61, histidine 80, histidine 126, and glutamate 130. Residues 202–248 enclose the F-box domain; the sequence is STGITHLPPEVMLSIFSYLNPQELCRCSQVSMKWSQLTKTGSLWKHL. LRR repeat units follow at residues 340–364, 365–392, 393–418, 479–508, 576–607, 608–635, and 636–661; these read SSAV…LDLT, QTDI…DLSG, CEKI…QSGF, LWML…CVVE, TRLP…SLSG, CYQI…NLSG, and CLTI…YFYY. The [2Fe-2S] cluster site is built by cysteine 662, cysteine 676, cysteine 686, and cysteine 687.

Part of a SCF (SKP1-cullin-F-box) protein ligase complex. Interacts with ACO1/IRP1, IREB2/IRP2; the interaction depends on the [2Fe-2S] cluster. Interacts with DCTN1/p150-glued. [2Fe-2S] cluster is required as a cofactor. In terms of processing, polybiquitinated upon iron and oxygen depletion, leading to its degradation by the proteasome. Ubiquitination is regulated by the hemerythrin-like region that acts as an oxygen and iron sensor. Undergoes constitutive ubiquitin-dependent degradation at the steady state by HERC2.

Its subcellular location is the cytoplasm. The protein resides in the perinuclear region. The protein localises to the nucleus. It functions in the pathway protein modification; protein ubiquitination. With respect to regulation, an iron-sulfur cluster promotes IRP2 polyubiquitination and degradation in response to both iron and oxygen concentrations. Functionally, component of some SCF (SKP1-cullin-F-box) protein ligase complex that plays a central role in iron homeostasis by promoting the ubiquitination and subsequent degradation of IREB2/IRP2. The C-terminal domain of FBXL5 contains a redox-sensitive [2Fe-2S] cluster that, upon oxidation, promotes binding to IRP2 to effect its oxygen-dependent degradation. Under iron deficiency conditions, the N-terminal hemerythrin-like (Hr) region, which contains a diiron metal center, cannot bind iron and undergoes conformational changes that destabilize the FBXL5 protein and cause its ubiquitination and degradation. When intracellular iron levels start rising, the Hr region is stabilized. Additional increases in iron levels facilitate the assembly and incorporation of a redox active [2Fe-2S] cluster in the C-terminal domain. Only when oxygen level is high enough to maintain the cluster in its oxidized state can FBXL5 recruit IRP2 as a substrate for polyubiquination and degradation. Promotes ubiquitination and subsequent degradation of the dynactin complex component DCTN1. Within the nucleus, promotes the ubiquitination of SNAI1; preventing its interaction with DNA and promoting its degradation. Negatively regulates DNA damage response by mediating the ubiquitin-proteasome degradation of the DNA repair protein NABP2. This is F-box/LRR-repeat protein 5 (FBXL5) from Pongo abelii (Sumatran orangutan).